A 103-amino-acid polypeptide reads, in one-letter code: Large ribosomal subunit protein bL21 (103 aa).

It belongs to the bacterial ribosomal protein bL21 family. Part of the 50S ribosomal subunit. Contacts protein L20.

This protein binds to 23S rRNA in the presence of protein L20. The chain is Large ribosomal subunit protein bL21 from Chromobacterium violaceum (strain ATCC 12472 / DSM 30191 / JCM 1249 / CCUG 213 / NBRC 12614 / NCIMB 9131 / NCTC 9757 / MK).